An 868-amino-acid chain; its full sequence is Pro-neuregulin-2, membrane-bound isoform (868 aa).

Residues 1–114 (MRQVCCSALP…AAGGMRRDPA (114 aa)) form a disordered region. Positions 1-127 (MRQVCCSALP…SMLLFGVSLA (127 aa)) are excised as a propeptide. Positions 19-75 (SSYSYSDSSSSSSSNNSSSSTSSRSSSRSSSRSSRGSTTTTSSSENSGSNSGSIFRP) are enriched in low complexity. N-linked (GlcNAc...) asparagine glycosylation is found at N33 and N34. Residues 76 to 90 (AAPPEPRPQPQPQPR) show a composition bias toward pro residues. The span at 91–108 (SPAARRAAARSRAAAAGG) shows a compositional bias: low complexity. At 128–429 (CYSPSLKSVQ…KEAEELYQKR (302 aa)) the chain is on the extracellular side. N-linked (GlcNAc...) asparagine glycans are attached at residues N163, N294, and N362. Residues 253 to 348 (PKLKKMKSQT…RGRLHVNSVS (96 aa)) enclose the Ig-like C2-type domain. Disulfide bonds link C273/C327, C361/C375, C369/C386, and C388/C397. An EGF-like domain is found at 357–398 (HARKCNETAKSYCVNGGVCYYIEGINQLSCKCPNGFFGQRCL). The helical transmembrane segment at 430 to 450 (VLTITGICVALLVVGIVCVVA) threads the bilayer. Residues 451–868 (YCKTKKQRRQ…TRAKQDSGPL (418 aa)) are Cytoplasmic-facing. Disordered regions lie at residues 469-488 (MCPA…PRLD), 516-553 (TFSG…SESL), 671-690 (LLRH…DMQR), 720-806 (ASPF…DGAL), and 823-868 (LRSD…SGPL). A compositionally biased stretch (low complexity) spans 518–530 (SGSHSCSPSHHCS). The segment covering 538–551 (HRHESHTWSLERSE) has biased composition (basic and acidic residues). A compositionally biased stretch (low complexity) spans 766 to 794 (LNGLAAQRARAARDSLSLSSGSGCGSASA).

Belongs to the neuregulin family. In terms of assembly, interacts with ERBB3 and ERBB4. In terms of processing, proteolytic cleavage close to the plasma membrane on the external face leads to the release of the soluble growth factor form. Post-translationally, extensive glycosylation precedes the proteolytic cleavage. In terms of tissue distribution, expressed in most parts of the brain, especially the olfactory bulb and cerebellum where it localizes in granule and Purkinje cells. In the hippocampus, found in the granule cells of the dentate gyrus. In the basal forebrain, found in the cholinergic cells. In the hindbrain, weakly detectable in the motor trigeminal nucleus. Not detected in the hypothalamus. Also found in the liver and in the thymus. Not detected in heart, adrenal gland, or testis.

Its subcellular location is the cell membrane. It localises to the secreted. Functionally, direct ligand for ERBB3 and ERBB4 tyrosine kinase receptors. Concomitantly recruits ERBB1 and ERBB2 coreceptors, resulting in ligand-stimulated tyrosine phosphorylation and activation of the ERBB receptors. May also promote the heterodimerization with the EGF receptor. This is Pro-neuregulin-2, membrane-bound isoform (Nrg2) from Rattus norvegicus (Rat).